We begin with the raw amino-acid sequence, 158 residues long: Transcription antitermination protein NusB (158 aa).

It belongs to the NusB family.

In terms of biological role, involved in transcription antitermination. Required for transcription of ribosomal RNA (rRNA) genes. Binds specifically to the boxA antiterminator sequence of the ribosomal RNA (rrn) operons. The protein is Transcription antitermination protein NusB of Bartonella henselae (strain ATCC 49882 / DSM 28221 / CCUG 30454 / Houston 1) (Rochalimaea henselae).